A 69-amino-acid chain; its full sequence is Cell division protein ZapB (69 aa).

Residues 6–68 adopt a coiled-coil conformation; it reads LEQLEARVQS…LGKMDQMNSE (63 aa).

It belongs to the ZapB family. As to quaternary structure, homodimer. The ends of the coiled-coil dimer bind to each other, forming polymers. Interacts with FtsZ.

Its subcellular location is the cytoplasm. Its function is as follows. Non-essential, abundant cell division factor that is required for proper Z-ring formation. It is recruited early to the divisome by direct interaction with FtsZ, stimulating Z-ring assembly and thereby promoting cell division earlier in the cell cycle. Its recruitment to the Z-ring requires functional FtsA or ZipA. The polypeptide is Cell division protein ZapB (Tolumonas auensis (strain DSM 9187 / NBRC 110442 / TA 4)).